Here is a 70-residue protein sequence, read N- to C-terminus: DNA-directed RNA polymerase subunit omega (70 aa).

It belongs to the RNA polymerase subunit omega family. The RNAP catalytic core consists of 2 alpha, 1 beta, 1 beta' and 1 omega subunit. When a sigma factor is associated with the core the holoenzyme is formed, which can initiate transcription.

It carries out the reaction RNA(n) + a ribonucleoside 5'-triphosphate = RNA(n+1) + diphosphate. Promotes RNA polymerase assembly. Latches the N- and C-terminal regions of the beta' subunit thereby facilitating its interaction with the beta and alpha subunits. The protein is DNA-directed RNA polymerase subunit omega of Clostridium perfringens (strain ATCC 13124 / DSM 756 / JCM 1290 / NCIMB 6125 / NCTC 8237 / Type A).